Consider the following 250-residue polypeptide: Probable transcriptional regulatory protein Ctha_1786 (250 aa).

This sequence belongs to the TACO1 family.

The protein localises to the cytoplasm. The chain is Probable transcriptional regulatory protein Ctha_1786 from Chloroherpeton thalassium (strain ATCC 35110 / GB-78).